Reading from the N-terminus, the 129-residue chain is Small ribosomal subunit protein uS11 (129 aa).

The protein belongs to the universal ribosomal protein uS11 family. Part of the 30S ribosomal subunit. Interacts with proteins S7 and S18. Binds to IF-3.

In terms of biological role, located on the platform of the 30S subunit, it bridges several disparate RNA helices of the 16S rRNA. Forms part of the Shine-Dalgarno cleft in the 70S ribosome. This chain is Small ribosomal subunit protein uS11, found in Aeromonas hydrophila subsp. hydrophila (strain ATCC 7966 / DSM 30187 / BCRC 13018 / CCUG 14551 / JCM 1027 / KCTC 2358 / NCIMB 9240 / NCTC 8049).